The primary structure comprises 397 residues: MAKAKFERTKPHVNIGTIGHVDHGKTTLTAAISRVLSERLPSNTNVKQDFDAIDSAPEERQRGITINISHIEYETEKRHYAHVDAPGHADYIKNMITGAAQMDGAILVVAATDGAMAQTREHVLLAKQVGVPYLLVALNKADMVSDEEILELVELEVRELLSTHGFDGENVPVVRVSGLKALEGDQKWGDAVMELMKAVDESIPDPVRDRDKPFLMPIEDVFTITGRGTVVTGRAERGVLAVNSEVEIVGIRPTQKTTVTGIEMFRKQLDEAWAGENCGLLLRGTKREDVERGQVVVKPGSVTPHTKFEGKAYILSKDEGGRHNPFYSNYRPQFYFRTTDVTGVITLPEGTEMVMPGDTISITVDLIQPIAMEEGLGFAIREGGRTVGAGTVVKILE.

The tr-type G domain occupies 10-207 (KPHVNIGTIG…AVDESIPDPV (198 aa)). Residues 19-26 (GHVDHGKT) are G1. Position 19-26 (19-26 (GHVDHGKT)) interacts with GTP. Position 26 (Thr26) interacts with Mg(2+). The tract at residues 63-67 (GITIN) is G2. The segment at 84 to 87 (DAPG) is G3. Residues 84–88 (DAPGH) and 139–142 (NKAD) contribute to the GTP site. The segment at 139-142 (NKAD) is G4. The tract at residues 177 to 179 (SGL) is G5.

Belongs to the TRAFAC class translation factor GTPase superfamily. Classic translation factor GTPase family. EF-Tu/EF-1A subfamily. Monomer.

It is found in the cytoplasm. It carries out the reaction GTP + H2O = GDP + phosphate + H(+). Its function is as follows. GTP hydrolase that promotes the GTP-dependent binding of aminoacyl-tRNA to the A-site of ribosomes during protein biosynthesis. This Tropheryma whipplei (strain TW08/27) (Whipple's bacillus) protein is Elongation factor Tu.